A 364-amino-acid polypeptide reads, in one-letter code: Palmitoyltransferase ZDHHC9 (364 aa).

The Cytoplasmic portion of the chain corresponds to 1-35 (MSVMVVRKKVTRKWEKLPGRNTFCCDGRVMMARQK). A helical transmembrane segment spans residues 36 to 56 (GIFYLTLFLILGTCTLFFAFE). Over 57 to 63 (CRYLAVQ) the chain is Lumenal. A helical membrane pass occupies residues 64 to 84 (LSPAIPVFAAMLFLFSMATLL). Topologically, residues 85–183 (RTSFSDPGVI…NCVGKRNYRY (99 aa)) are cytoplasmic. A DHHC domain is found at 139–189 (KYCYTCKIFRPPRASHCSICDNCVERFDHHCPWVGNCVGKRNYRYFYLFIL). The S-palmitoyl cysteine intermediate role is filled by Cys169. The chain crosses the membrane as a helical span at residues 184–204 (FYLFILSLSLLTIYVFAFNIV). Over 205–228 (YVALKSLKIGFLETLKETPGTVLE) the chain is Lumenal. The chain crosses the membrane as a helical span at residues 229-249 (VLICFFTLWSVVGLTGFHTFL). At 250-364 (VALNQTTNED…PPQEASEAEK (115 aa)) the chain is on the cytoplasmic side. A disordered region spans residues 303–364 (PLEESGSRPP…PPQEASEAEK (62 aa)). A compositionally biased stretch (polar residues) spans 310-336 (RPPSTQETSSSLLPQSPASTEHMNSNE). Residues 346 to 356 (EMPPPEPPEPP) show a composition bias toward pro residues.

The protein belongs to the DHHC palmitoyltransferase family. ERF2/ZDHHC9 subfamily. In terms of assembly, interacts with GOLGA7.

The protein localises to the endoplasmic reticulum membrane. It is found in the golgi apparatus membrane. The catalysed reaction is L-cysteinyl-[protein] + hexadecanoyl-CoA = S-hexadecanoyl-L-cysteinyl-[protein] + CoA. Functionally, palmitoyltransferase that catalyzes the addition of palmitate onto various protein substrates, such as ADRB2, GSDMD, HRAS, NRAS and CGAS. The ZDHHC9-GOLGA7 complex is a palmitoyltransferase specific for HRAS and NRAS. May have a palmitoyltransferase activity toward the beta-2 adrenergic receptor/ADRB2 and therefore regulate G protein-coupled receptor signaling. Acts as a regulator of innate immunity by catalyzing palmitoylation of CGAS, thereby promoting CGAS homodimerization and cyclic GMP-AMP synthase activity. Activates pyroptosis by catalyzing palmitoylation of gasdermin-D (GSDMD), thereby promoting membrane translocation and pore formation of GSDMD. The chain is Palmitoyltransferase ZDHHC9 (Zdhhc9) from Mus musculus (Mouse).